Here is a 412-residue protein sequence, read N- to C-terminus: Peptidase T (412 aa).

His79 contacts Zn(2+). Asp81 is an active-site residue. Asp142 is a binding site for Zn(2+). Catalysis depends on Glu176, which acts as the Proton acceptor. Residues Glu177, Asp199, and His381 each coordinate Zn(2+).

Belongs to the peptidase M20B family. The cofactor is Zn(2+).

It localises to the cytoplasm. It catalyses the reaction Release of the N-terminal residue from a tripeptide.. In terms of biological role, cleaves the N-terminal amino acid of tripeptides. The protein is Peptidase T of Exiguobacterium sp. (strain ATCC BAA-1283 / AT1b).